A 333-amino-acid chain; its full sequence is Cell shape-determining protein Mbl (333 aa).

ATP contacts are provided by residues 12–14 (TAN), 156–158 (GGT), 204–207 (EDIK), and 284–287 (GGAL).

This sequence belongs to the FtsA/MreB family. Forms polymers.

The protein localises to the cytoplasm. Its function is as follows. Forms membrane-associated dynamic filaments that are essential for cell shape determination. Acts by regulating cell wall synthesis and cell elongation, and thus cell shape. A feedback loop between cell geometry and Mbl localization may maintain elongated cell shape by targeting cell wall growth to regions of negative cell wall curvature. The sequence is that of Cell shape-determining protein Mbl from Bacillus cereus (strain ATCC 10987 / NRS 248).